We begin with the raw amino-acid sequence, 57 residues long: Lantibiotic nukacin (57 aa).

A propeptide spanning residues 1–30 (MENSKVMKDIEVANLLEEVQEDELNEVLGA) is cleaved from the precursor. Positions 39–44 (TVSHDC) form a cross-link, beta-methyllanthionine (Thr-Cys). 2 consecutive cross-links (lanthionine (Ser-Cys)) follow at residues 41–55 (SHDC…VFTC) and 48–56 (SFQFVFTCC). Threonine 54 bears the 2,3-didehydrobutyrine mark.

Post-translationally, maturation of lantibiotics involves the enzymatic conversion of Thr, and Ser into dehydrated AA and the formation of thioether bonds with cysteine. This is followed by membrane translocation and cleavage of the modified precursor.

Its subcellular location is the secreted. Its function is as follows. Lanthionine-containing peptide antibiotic (lantibiotic) active on Gram-positive bacteria. The bactericidal activity of lantibiotics is based on depolarization of energized bacterial cytoplasmic membranes, initiated by the formation of aqueous transmembrane pores. This Staphylococcus simulans protein is Lantibiotic nukacin.